Here is a 495-residue protein sequence, read N- to C-terminus: EF-hand calcium-binding domain-containing protein 14 (495 aa).

Disordered regions lie at residues 1-50 and 381-404; these read MKKR…EEEE and TNKPESNRPPETADEEQVESFTSK. Ser-17 carries the post-translational modification Phosphoserine. Residues 18–31 are compositionally biased toward basic residues; that stretch reads RRKKPKKGPSSHRL. Residues 37 to 50 are compositionally biased toward acidic residues; the sequence is PDSDSESSSEEEEE. EF-hand domains follow at residues 434 to 463 and 464 to 495; these read SSTEDLQDLFRKTGQDVDGKLTYQEIWTSL and GSAMPEPESLRAFDSDGDGRYSFLELRVALGI. Asp-477, Asp-479, Asp-481, Arg-483, and Glu-488 together coordinate Ca(2+).

The polypeptide is EF-hand calcium-binding domain-containing protein 14 (EFCAB14) (Homo sapiens (Human)).